The sequence spans 152 residues: Male-specific protein scotti (152 aa).

It belongs to the male-specific scotti family.

In terms of biological role, post-meiotically transcribed gene that has a role in late spermiogenesis; required for actin cone progression during spermatid individualization. In Drosophila mojavensis (Fruit fly), this protein is Male-specific protein scotti.